Consider the following 471-residue polypeptide: Adenosylhomocysteinase (471 aa).

Residues Thr60, Asp135, and Glu196 each coordinate substrate. Thr197–Thr199 serves as a coordination point for NAD(+). Substrate contacts are provided by Lys226 and Asp230. NAD(+) is bound by residues Asn231, Gly260 to Gly265, Glu283, Asn318, Ile339 to His341, and Asn387.

The protein belongs to the adenosylhomocysteinase family. It depends on NAD(+) as a cofactor.

It is found in the cytoplasm. It catalyses the reaction S-adenosyl-L-homocysteine + H2O = L-homocysteine + adenosine. The protein operates within amino-acid biosynthesis; L-homocysteine biosynthesis; L-homocysteine from S-adenosyl-L-homocysteine: step 1/1. May play a key role in the regulation of the intracellular concentration of adenosylhomocysteine. The chain is Adenosylhomocysteinase from Chlorobium luteolum (strain DSM 273 / BCRC 81028 / 2530) (Pelodictyon luteolum).